A 270-amino-acid polypeptide reads, in one-letter code: Beta carbonic anhydrase 1 (270 aa).

Positions 39, 41, 105, and 108 each coordinate Zn(2+).

The protein belongs to the beta-class carbonic anhydrase family. In terms of assembly, oligomer. Zn(2+) serves as cofactor.

The catalysed reaction is hydrogencarbonate + H(+) = CO2 + H2O. In terms of biological role, reversible hydration of carbon dioxide. This chain is Beta carbonic anhydrase 1 (bca-1), found in Caenorhabditis elegans.